Consider the following 483-residue polypeptide: Cytochrome P450 71A23 (483 aa).

Residues 1–21 (MILFLCLIILFIITILFFKKH) traverse the membrane as a helical segment. Position 429 (cysteine 429) interacts with heme.

Belongs to the cytochrome P450 family. Heme serves as cofactor.

It is found in the membrane. This is Cytochrome P450 71A23 (CYP71A23) from Arabidopsis thaliana (Mouse-ear cress).